Consider the following 371-residue polypeptide: Macronuclear solute carrier homolog CR-MSC (371 aa).

Solcar repeat units lie at residues 16–111 (RMNY…FYDK), 120–208 (ARPD…CKEN), and 215–304 (PHWI…LSQF). The next 6 helical transmembrane spans lie at 22–42 (FAAA…LDMV), 89–109 (TFFF…GYFY), 126–146 (VAAG…IDIV), 184–204 (AGAN…IYDW), 221–241 (LWGT…FDMI), and 281–301 (FGSF…ICYL).

The protein belongs to the mitochondrial carrier (TC 2.A.29) family.

Its subcellular location is the membrane. The polypeptide is Macronuclear solute carrier homolog CR-MSC (Oxytricha fallax).